Here is a 542-residue protein sequence, read N- to C-terminus: Chaperonin GroEL (542 aa).

Residues 29-32 (TLGP), 86-90 (DGTTT), Gly-413, 476-478 (NAA), and Asp-492 each bind ATP.

This sequence belongs to the chaperonin (HSP60) family. Forms a cylinder of 14 subunits composed of two heptameric rings stacked back-to-back. Interacts with the co-chaperonin GroES.

The protein resides in the cytoplasm. It catalyses the reaction ATP + H2O + a folded polypeptide = ADP + phosphate + an unfolded polypeptide.. Functionally, together with its co-chaperonin GroES, plays an essential role in assisting protein folding. The GroEL-GroES system forms a nano-cage that allows encapsulation of the non-native substrate proteins and provides a physical environment optimized to promote and accelerate protein folding. The sequence is that of Chaperonin GroEL from Lactococcus lactis subsp. cremoris (strain MG1363).